Here is a 768-residue protein sequence, read N- to C-terminus: Cullin-3 (768 aa).

An N-acetylserine modification is found at S2. Residues 2–41 (SNLSKGTGSRKDTKMRIRAFPMTMDEKYVNSIWDLLKNAI) are interaction with KLHL18. S585 carries the phosphoserine modification. Residues 677-698 (VAAKQGESDPERKETRQKVDDD) form a disordered region. Positions 682–698 (GESDPERKETRQKVDDD) are enriched in basic and acidic residues. A Cullin neddylation domain is found at 698–760 (DRKHEIEAAI…REYLARTPED (63 aa)). K712 is covalently cross-linked (Glycyl lysine isopeptide (Lys-Gly) (interchain with G-Cter in NEDD8)).

The protein belongs to the cullin family. As to quaternary structure, forms neddylation-dependent homodimers. Component of multiple BCR (BTB-CUL3-RBX1) E3 ubiquitin-protein ligase complexes formed of CUL3, RBX1 and a variable BTB domain-containing protein acting as both, adapter to cullin and substrate recognition subunit. The BCR complex may be active as a heterodimeric complex, in which NEDD8, covalently attached to one CUL3 molecule, binds to the C-terminus of a second CUL3 molecule. Interacts with RBX1, RNF7 and TIP120A/CAND1. Part of the BCR(SPOP) containing SPOP, and of BCR containing homodimeric SPOPL or the heterodimer formed by SPOP and SPOPL. Part of the probable BCR(KLHL9-KLHL13) complex with BTB domain proteins KLHL9 and KLHL13. Part of the BCR(KLHL41) complex containing KLHL41. Component of the BCR(KLHL12) E3 ubiquitin ligase complex, at least composed of CUL3 and KLHL12 and RBX1. Component of the BCR(KLHL3) E3 ubiquitin ligase complex, at least composed of CUL3 and KLHL3 and RBX1. Part of the BCR(ENC1) complex containing ENC1. Part of a complex consisting of BMI1/PCGF4, CUL3 and SPOP. Part of a complex consisting of BRMS1, CUL3 and SPOP. Component of the BCR(KLHL21) E3 ubiquitin ligase complex, at least composed of CUL3, KLHL21 and RBX1. Component of the BCR(KLHL22) E3 ubiquitin ligase complex, at least composed of CUL3, KLHL22 and RBX1. Component of the BCR(KLHL25) E3 ubiquitin ligase complex, at least composed of CUL3, KLHL25 and RBX1. Part of a complex consisting of MACROH2A1, CUL3 and SPOP. Component of the BCR(KLHL42) E3 ubiquitin ligase complex, at least composed of CUL3 and KLHL42. Component of the BCR(KBTBD8) E3 ubiquitin ligase complex, at least composed of CUL3, KBTBD8 and RBX1. Interacts with KLHL42 (via the BTB domain). Interacts with KATNA1; the interaction is enhanced by KLHL42. Interacts with KCTD5, KLHL9, KLHL11, KLHL13, GAN, ZBTB16, KLHL3, KLHL15, KLHL20, KLHL36, GMCL2, BTBD1. Part of a complex that contains CUL3, RBX1 and GAN. Interacts (via BTB domain) with KLHL17; the interaction regulates surface GRIK2 expression. Interacts with KCTD7. Part of the BCR(GAN) complex containing GAN. Part of the BCR(KEAP1) complex containing KEAP1. Interacts with KAT5 and ATF2. Interacts with KCTD17 in the BCR(KCTD17) E3 ubiquitin ligase complex, at least composed of CUL3, KCTD17 and RBX1. Interacts (when neddylated) with ARIH1; leading to activate the E3 ligase activity of ARIH1. Interacts with COPS9. Interacts with PPP2R5B; this interaction is indirect and mediated through KLHL15-binding and leads to PPP2R5B proteasomal degradation. Interacts with RBBP8/CtIP; this interaction is indirect and mediated through KLHL15-binding and leads to RBBP8 proteasomal degradation. Interacts with KLHL24 in the BCR(KLHL24) E3 ubiquitin ligase complex, composed of CUL3, RBX1 and KLHL24. Interacts with RHOBTB2. Interacts with CYCE. Interacts with KLHL10. Interacts with AURKA and KLHL18 (via BTB domain). Interacts (unneddylated form) with DCUN1D1, DCUN1D2, DCUN1D3, DCUN1D4 and DCUN1D5; these interactions promote the cullin neddylation. Component of a BCR3 (BTB-CUL3-RBX1) E3 ubiquitin ligase complex, also named Cul3-RING ubiquitin ligase complex CUL3(KBTBD6/7), composed of CUL3, RBX1, KBTBD6 and KBTBD7. Component of the BCR(KBTBD2) E3 ubiquitin ligase complex, at least composed of CUL3, KBTBD2 and RBX1. Interacts with KBTBD2 (via the BTB domain). Component of the BCR(KBTBD4) E3 ubiquitin ligase complex, at least composed of CUL3, KBTBD4 and RBX1. Neddylated. Attachment of NEDD8 is required for the E3 ubiquitin-protein ligase activity of the BCR complex. Deneddylated via its interaction with the COP9 signalosome (CSN) complex. As to expression, widely expressed, with highest expression in brain, spleen and testis. In the testis, it is mainly expressed in spermatids.

The protein resides in the nucleus. It is found in the golgi apparatus. Its subcellular location is the cell projection. The protein localises to the cilium. It localises to the flagellum. The protein resides in the cytoplasm. It is found in the cytoskeleton. Its subcellular location is the spindle. The protein localises to the microtubule organizing center. It localises to the centrosome. The protein resides in the spindle pole. The protein operates within protein modification; protein ubiquitination. In terms of biological role, core component of multiple cullin-RING-based BCR (BTB-CUL3-RBX1) E3 ubiquitin-protein ligase complexes which mediate the ubiquitination and subsequent proteasomal degradation of target proteins. BCR complexes and ARIH1 collaborate in tandem to mediate ubiquitination of target proteins. As a scaffold protein may contribute to catalysis through positioning of the substrate and the ubiquitin-conjugating enzyme. The E3 ubiquitin-protein ligase activity of the complex is dependent on the neddylation of the cullin subunit and is inhibited by the association of the deneddylated cullin subunit with TIP120A/CAND1. The functional specificity of the BCR complex depends on the BTB domain-containing protein as the substrate recognition component. BCR(KLHL42) is involved in ubiquitination of KATNA1. BCR(SPOP) is involved in ubiquitination of BMI1/PCGF4, BRMS1, MACROH2A1 and DAXX, GLI2 and GLI3. Can also form a cullin-RING-based BCR (BTB-CUL3-RBX1) E3 ubiquitin-protein ligase complex containing homodimeric SPOPL or the heterodimer formed by SPOP and SPOPL; these complexes have lower ubiquitin ligase activity. BCR(KLHL9-KLHL13) controls the dynamic behavior of AURKB on mitotic chromosomes and thereby coordinates faithful mitotic progression and completion of cytokinesis. BCR(KLHL12) is involved in ER-Golgi transport by regulating the size of COPII coats, thereby playing a key role in collagen export, which is required for embryonic stem (ES) cells division: BCR(KLHL12) acts by mediating monoubiquitination of SEC31 (SEC31A or SEC31B). BCR(KLHL3) acts as a regulator of ion transport in the distal nephron; by mediating ubiquitination of WNK4. The BCR(KLHL20) E3 ubiquitin ligase complex is involved in interferon response and anterograde Golgi to endosome transport: it mediates both ubiquitination leading to degradation and 'Lys-33'-linked ubiquitination. The BCR(KLHL21) E3 ubiquitin ligase complex regulates localization of the chromosomal passenger complex (CPC) from chromosomes to the spindle midzone in anaphase and mediates the ubiquitination of AURKB. The BCR(KLHL22) ubiquitin ligase complex mediates monoubiquitination of PLK1, leading to PLK1 dissociation from phosphoreceptor proteins and subsequent removal from kinetochores, allowing silencing of the spindle assembly checkpoint (SAC) and chromosome segregation. The BCR(KLHL22) ubiquitin ligase complex is also responsible for the amino acid-stimulated 'Lys-48' polyubiquitination and proteasomal degradation of DEPDC5. Through the degradation of DEPDC5, releases the GATOR1 complex-mediated inhibition of the TORC1 pathway. The BCR(KLHL25) ubiquitin ligase complex is involved in translational homeostasis by mediating ubiquitination and subsequent degradation of hypophosphorylated EIF4EBP1 (4E-BP1). The BCR(KLHL25) ubiquitin ligase complex is also involved in lipid synthesis by mediating ubiquitination and degradation of ACLY. The BCR(KBTBD8) complex acts by mediating monoubiquitination of NOLC1 and TCOF1, leading to remodel the translational program of differentiating cells in favor of neural crest specification. Involved in ubiquitination of cyclin E and of cyclin D1 (in vitro) thus involved in regulation of G1/S transition. Involved in the ubiquitination of KEAP1, ENC1 and KLHL41. In concert with ATF2 and RBX1, promotes degradation of KAT5 thereby attenuating its ability to acetylate and activate ATM. The BCR(KCTD17) E3 ubiquitin ligase complex mediates ubiquitination and degradation of TCHP, a down-regulator of cilium assembly, thereby inducing ciliogenesis. The BCR(KLHL24) E3 ubiquitin ligase complex mediates ubiquitination of KRT14, controls KRT14 levels during keratinocytes differentiation, and is essential for skin integrity. The BCR(KLHL18) E3 ubiquitin ligase complex mediates the ubiquitination of AURKA leading to its activation at the centrosome which is required for initiating mitotic entry. The BCR(KEAP1) E3 ubiquitin ligase complex acts as a key sensor of oxidative and electrophilic stress by mediating ubiquitination and degradation of NFE2L2/NRF2, a transcription factor regulating expression of many cytoprotective genes. As part of the CUL3(KBTBD6/7) E3 ubiquitin ligase complex functions mediates 'Lys-48' ubiquitination and proteasomal degradation of TIAM1. By controlling the ubiquitination of that RAC1 guanine exchange factors (GEF), regulates RAC1 signal transduction and downstream biological processes including the organization of the cytoskeleton, cell migration and cell proliferation. The BCR(KBTBD4) E3 ubiquitin ligase complex targets CoREST corepressor complex components RCOR1, KDM1A/LSD1 and HDAC2 for proteasomal degradation with RCOR1 likely to be the primary target while degradation of KDM1A and HDAC2 is likely due to their association with RCOR1. It also targets RCOR3, MIER2 and MIER3 for proteasomal degradation as well as associated proteins ZNF217 and RREB1 with degradation being dependent on the presence of an ELM2 domain in the target proteins. The BCR(ARMC5) complex mediates premature transcription termination of transcripts that are unfavorably configured for transcriptional elongation by mediating ubiquitination of Pol II subunit POLR2A. Required for 'Lys-63'-linked ubiquitination of large ribosomal subunit protein MRPL12. In Mus musculus (Mouse), this protein is Cullin-3 (Cul3).